The sequence spans 147 residues: Hemoglobin subunit beta-3 (147 aa).

Positions 2-147 (EWTDAERTAI…VTSALSRQYH (146 aa)) constitute a Globin domain. Heme b is bound by residues histidine 63 and histidine 92.

Belongs to the globin family. As to quaternary structure, heterotetramer of two alpha chains and two beta chains. Red blood cells.

Involved in oxygen transport from gills to the various peripheral tissues. The polypeptide is Hemoglobin subunit beta-3 (hbb3) (Muraena helena (Mediterranean moray)).